The primary structure comprises 139 residues: Nuclear receptor 2C2-associated protein (139 aa).

It belongs to the NR2C2AP family. In terms of assembly, interacts with NR2C2/TR4. As to expression, expressed in all tissues examined, with highest expression in heart, skeletal muscle and pancreas.

The protein resides in the nucleus. Functionally, may act as a repressor of NR2C2-mediated transactivation by suppressing the binding between NR2C2/TR4 and the TR4-response element in target genes. The chain is Nuclear receptor 2C2-associated protein (NR2C2AP) from Homo sapiens (Human).